The sequence spans 228 residues: Urease accessory protein UreE (228 aa).

The disordered stretch occupies residues 193-228 (HGSGLHIHGIHSHGDGHSHSHDDHDHDHNHDHDHKH). Positions 204 to 228 (SHGDGHSHSHDDHDHDHNHDHDHKH) are enriched in basic and acidic residues.

Belongs to the UreE family.

Its subcellular location is the cytoplasm. In terms of biological role, involved in urease metallocenter assembly. Binds nickel. Probably functions as a nickel donor during metallocenter assembly. This is Urease accessory protein UreE from Yersinia rohdei.